A 162-amino-acid chain; its full sequence is Regulator of sigma D (162 aa).

Belongs to the Rsd/AlgQ family. As to quaternary structure, interacts with RpoD.

It is found in the cytoplasm. In terms of biological role, binds RpoD and negatively regulates RpoD-mediated transcription activation by preventing the interaction between the primary sigma factor RpoD with the catalytic core of the RNA polymerase and with promoter DNA. May be involved in replacement of the RNA polymerase sigma subunit from RpoD to RpoS during the transition from exponential growth to the stationary phase. This is Regulator of sigma D from Salmonella arizonae (strain ATCC BAA-731 / CDC346-86 / RSK2980).